A 222-amino-acid chain; its full sequence is Small ribosomal subunit protein uS3 (222 aa).

In terms of domain architecture, KH type-2 spans 39–109 (IRNFVKKKVY…NILINIVEVK (71 aa)).

This sequence belongs to the universal ribosomal protein uS3 family. As to quaternary structure, part of the 30S ribosomal subunit. Forms a tight complex with proteins S10 and S14.

Binds the lower part of the 30S subunit head. Binds mRNA in the 70S ribosome, positioning it for translation. The polypeptide is Small ribosomal subunit protein uS3 (Clostridium tetani (strain Massachusetts / E88)).